The primary structure comprises 694 residues: Potassium-transporting ATPase ATP-binding subunit (694 aa).

Helical transmembrane passes span 36 to 56, 62 to 82, 218 to 238, and 249 to 269; these read VMFV…RDLI, LAFS…ANFA, IALN…TATI, and IPII…IGAL. The active-site 4-aspartylphosphate intermediate is Asp-306. ATP-binding positions include Asp-343, Glu-347, 376-383, and Lys-394; that span reads FTAQTRMS. Residues Asp-530 and Asp-534 each coordinate Mg(2+). The next 3 helical transmembrane spans lie at 600 to 620, 628 to 648, and 666 to 686; these read FAII…LNVM, AILS…PLSL, and LVIY…LIDL.

It belongs to the cation transport ATPase (P-type) (TC 3.A.3) family. Type IA subfamily. The system is composed of three essential subunits: KdpA, KdpB and KdpC.

It localises to the cell inner membrane. The enzyme catalyses K(+)(out) + ATP + H2O = K(+)(in) + ADP + phosphate + H(+). Functionally, part of the high-affinity ATP-driven potassium transport (or Kdp) system, which catalyzes the hydrolysis of ATP coupled with the electrogenic transport of potassium into the cytoplasm. This subunit is responsible for energy coupling to the transport system and for the release of the potassium ions to the cytoplasm. This Agrobacterium fabrum (strain C58 / ATCC 33970) (Agrobacterium tumefaciens (strain C58)) protein is Potassium-transporting ATPase ATP-binding subunit.